The following is a 676-amino-acid chain: UvrABC system protein C (676 aa).

Positions 16 to 95 constitute a GIY-YIG domain; it reads VEPGVYRFRD…IKEFDPRFNI (80 aa). Residues 208-243 enclose the UVR domain; that stretch reads DRLVRDLERKMTAAAEDLDFERAARLRDDIGALRRA.

It belongs to the UvrC family. Interacts with UvrB in an incision complex.

It localises to the cytoplasm. Functionally, the UvrABC repair system catalyzes the recognition and processing of DNA lesions. UvrC both incises the 5' and 3' sides of the lesion. The N-terminal half is responsible for the 3' incision and the C-terminal half is responsible for the 5' incision. This chain is UvrABC system protein C, found in Mycobacterium sp. (strain JLS).